A 392-amino-acid chain; its full sequence is Sulfate adenylyltransferase (392 aa).

It belongs to the sulfate adenylyltransferase family.

It catalyses the reaction sulfate + ATP + H(+) = adenosine 5'-phosphosulfate + diphosphate. Its pathway is sulfur metabolism; hydrogen sulfide biosynthesis; sulfite from sulfate: step 1/3. This is Sulfate adenylyltransferase from Nostoc punctiforme (strain ATCC 29133 / PCC 73102).